Here is a 258-residue protein sequence, read N- to C-terminus: MTDNALRETIIRLAQPVVHTLGLVIWGVETARAGRTIVRLFVDVPTIPQRPGMPEGSEEPSSAITAPAPAHDPQESSGAEAPAAPTSATIEQCEEISRHLALALEVEDSIADAYVLEVSTPGLSRLFFSLEQMIPYVGDVVEARLHTPVASTDPAAHGGPRRVWRGTLVAVEDDAFVLAPVTVSPEGEVEDENQPPVRLPWEAVRRATRMYIFKKPQKPGKKPGKPQGKEVPKGGSGSTAPKKAAAKKKAGRTAAEND.

Disordered stretches follow at residues 48–88 (PQRP…PTSA) and 212–258 (IFKK…AEND). Over residues 215-224 (KPQKPGKKPG) the composition is skewed to basic residues.

It belongs to the RimP family.

Its subcellular location is the cytoplasm. Functionally, required for maturation of 30S ribosomal subunits. This Desulfovibrio desulfuricans (strain ATCC 27774 / DSM 6949 / MB) protein is Ribosome maturation factor RimP.